The primary structure comprises 699 residues: Elongation factor G (699 aa).

Residues 8–283 form the tr-type G domain; sequence EHIRNIGICA…AVVDFLPSPI (276 aa). GTP is bound by residues 17–24, 81–85, and 135–138; these read AHIDAGKT, DTPGH, and NKMD.

Belongs to the TRAFAC class translation factor GTPase superfamily. Classic translation factor GTPase family. EF-G/EF-2 subfamily.

It localises to the cytoplasm. Functionally, catalyzes the GTP-dependent ribosomal translocation step during translation elongation. During this step, the ribosome changes from the pre-translocational (PRE) to the post-translocational (POST) state as the newly formed A-site-bound peptidyl-tRNA and P-site-bound deacylated tRNA move to the P and E sites, respectively. Catalyzes the coordinated movement of the two tRNA molecules, the mRNA and conformational changes in the ribosome. The polypeptide is Elongation factor G (Rickettsia sibirica (strain ATCC VR-151 / 246)).